We begin with the raw amino-acid sequence, 119 residues long: Large ribosomal subunit protein bL20 (119 aa).

This sequence belongs to the bacterial ribosomal protein bL20 family.

Binds directly to 23S ribosomal RNA and is necessary for the in vitro assembly process of the 50S ribosomal subunit. It is not involved in the protein synthesizing functions of that subunit. The polypeptide is Large ribosomal subunit protein bL20 (Streptococcus pyogenes serotype M1).